A 1007-amino-acid polypeptide reads, in one-letter code: Serine/threonine-protein kinase PRP4 homolog (1007 aa).

Positions 1–102 are disordered; that stretch reads MAATEPPSLR…LSPAKRTKLD (102 aa). The residue at position 2 (Ala2) is an N-acetylalanine. A phosphoserine mark is found at Ser8, Ser21, Ser24, and Ser33. Composition is skewed to basic residues over residues 40–60 and 68–82; these read KHSRHKKKKHKHRSKHKKHKH and KKHKHKHKHKKHKRK. Residues 83-92 are compositionally biased toward basic and acidic residues; that stretch reads EVIEASDKEG. 2 positions are modified to phosphoserine: Ser88 and Ser94. Lys100 is subject to N6-acetyllysine; alternate. A Glycyl lysine isopeptide (Lys-Gly) (interchain with G-Cter in SUMO2); alternate cross-link involves residue Lys100. Lys112 participates in a covalent cross-link: Glycyl lysine isopeptide (Lys-Gly) (interchain with G-Cter in SUMO2). Lys118 is covalently cross-linked (Glycyl lysine isopeptide (Lys-Gly) (interchain with G-Cter in SUMO2); alternate). Lys118 is covalently cross-linked (Glycyl lysine isopeptide (Lys-Gly) (interchain with G-Cter in SUMO1); alternate). A Phosphoserine modification is found at Ser132. A Phosphotyrosine modification is found at Tyr141. 2 disordered regions span residues 141-535 and 560-583; these read YESG…EDEE and NISVPSEPSSPQSSTRSRSPSPDD. Phosphoserine is present on residues Ser143, Ser145, and Ser167. The span at 158–169 shows a compositional bias: low complexity; it reads GNRSSTRSSSTR. Glycyl lysine isopeptide (Lys-Gly) (interchain with G-Cter in SUMO2) cross-links involve residues Lys171 and Lys178. Basic residues-rich tracts occupy residues 180 to 203 and 215 to 231; these read SAKKRSKSRSKERTRHRSDKRKSK and RSKSKERRKSKSPSKRS. 6 positions are modified to phosphoserine: Ser240, Ser242, Ser258, Ser278, Ser292, and Ser294. A compositionally biased stretch (basic and acidic residues) spans 248–271; the sequence is RSQEKVGKARSPAEEKMKSEEKGK. A compositionally biased stretch (basic and acidic residues) spans 294-303; it reads SPVDLRDKSK. Residues 304–315 show a composition bias toward basic residues; the sequence is DRRSRSKERKSK. The segment covering 316–325 has biased composition (basic and acidic residues); sequence RSEIDKEKKP. A phosphoserine mark is found at Ser328, Ser354, Ser356, Ser366, and Ser368. Basic residues predominate over residues 342-367; that stretch reads PSRRPGRSPKRRSLSPKLRDKSRRSR. A Phosphothreonine modification is found at Thr385. A Phosphoserine modification is found at Ser387. Composition is skewed to basic and acidic residues over residues 395-408 and 415-429; these read RSLERKRREPERRR and RPRDDILGRCERSKD. Ser427, Ser431, and Ser437 each carry phosphoserine. Positions 438-497 are enriched in basic residues; that stretch reads PTRRRSRSPIRRRSRSPLRRSRSPRRRSRSPRRRDRSRRSRSRLRRRSRSRGGHRRRSRS. A phosphoserine mark is found at Ser518, Ser519, Ser520, Ser565, Ser569, Ser576, Ser578, and Ser580. A compositionally biased stretch (acidic residues) spans 518 to 535; that stretch reads SSSDDNLEDFDVEEEDEE. A compositionally biased stretch (low complexity) spans 562 to 581; that stretch reads SVPSEPSSPQSSTRSRSPSP. Glycyl lysine isopeptide (Lys-Gly) (interchain with G-Cter in SUMO2) cross-links involve residues Lys593 and Lys659. The Protein kinase domain occupies 687–1006; that stretch reads YNVYGYTGQG…ALQHAFIQEK (320 aa). ATP-binding positions include 693-701 and Lys717; that span reads TGQGVFSNV. Residue Lys717 is modified to N6-acetyllysine. The Proton acceptor role is filled by Asp815. Phosphotyrosine is present on Tyr849. Phosphoserine is present on Ser852.

Belongs to the protein kinase superfamily. CMGC Ser/Thr protein kinase family. Interacts with CLK1 C-terminus. Associates with the U5 snRNP and NCOR1 deacetylase complexes. Identified in the spliceosome C complex. Phosphorylated by CLK1. Autophosphorylated; phosphorylation inhibits interaction with its targets, such as PRPF6 or SMARCA4.

It localises to the nucleus. The protein localises to the chromosome. The protein resides in the centromere. It is found in the kinetochore. The enzyme catalyses L-seryl-[protein] + ATP = O-phospho-L-seryl-[protein] + ADP + H(+). It catalyses the reaction L-threonyl-[protein] + ATP = O-phospho-L-threonyl-[protein] + ADP + H(+). Its function is as follows. Serine/threonine kinase involved in spliceosomal assembly as well as mitosis and signaling regulation. Connects chromatin mediated regulation of transcription and pre-mRNA splicing. During spliceosomal assembly, interacts with and phosphorylates PRPF6 and PRPF31, components of the U4/U6-U5 tri-small nuclear ribonucleoprotein (snRNP), to facilitate the formation of the spliceosome B complex. Plays a role in regulating transcription and the spindle assembly checkpoint (SAC). Associates with U5 snRNP and NCOR1 deacetylase complexes which may allow a coordination of pre-mRNA splicing with chromatin remodeling events involved in transcriptional regulation. Associates and probably phosphorylates SMARCA4 and NCOR1. Phosphorylates SRSF1. Associates with kinetochores during mitosis and is necessary for recruitment and maintenance of the checkpoint proteins such as MAD1L1 and MAD12L1 at the kinetochores. Phosphorylates and regulates the activity of the transcription factors such as ELK1 and KLF13. Phosphorylates nuclear YAP1 and WWTR1/TAZ which induces nuclear exclusion and regulates Hippo signaling pathway, involved in tissue growth control. This chain is Serine/threonine-protein kinase PRP4 homolog (Prp4k), found in Mus musculus (Mouse).